Consider the following 64-residue polypeptide: Prokaryotic ubiquitin-like protein Pup (64 aa).

The interval 1–37 (MAQEQTKRGGGGGDDEDVTGTTAAGQERREKLAQDTD) is disordered. Positions 21 to 58 (TTAAGQERREKLAQDTDDLLDEIDDVLEENAEDFVRAY) are ARC ATPase binding. The stretch at 25-52 (GQERREKLAQDTDDLLDEIDDVLEENAE) forms a coiled coil. The residue at position 64 (Gln64) is a Deamidated glutamine. An Isoglutamyl lysine isopeptide (Gln-Lys) (interchain with K-? in acceptor proteins) cross-link involves residue Gln64.

This sequence belongs to the prokaryotic ubiquitin-like protein family. Strongly interacts with the proteasome-associated ATPase ARC through a hydrophobic interface; the interacting region of Pup lies in its C-terminal half. There is one Pup binding site per ARC hexamer ring. Is modified by deamidation of its C-terminal glutamine to glutamate by the deamidase Dop, a prerequisite to the subsequent pupylation process.

Its pathway is protein degradation; proteasomal Pup-dependent pathway. In terms of biological role, protein modifier that is covalently attached to lysine residues of substrate proteins, thereby targeting them for proteasomal degradation. The tagging system is termed pupylation. The sequence is that of Prokaryotic ubiquitin-like protein Pup from Mycobacterium marinum (strain ATCC BAA-535 / M).